A 496-amino-acid chain; its full sequence is MRSLLWASLLSGVLAGRALVSPDEFPEDIQLEDLLEGSQQLEDFAYAYPERNRVFGGKAHDDTVNYLYEELKKTGYYDVYKQPQVHLWSNADQTLKVGDEEIEAKTMTYSPSVEVTADVAVVKNLGCSEADYPSDVEGKVALIKRGECPFGDKSVLAAKAKAAASIVYNNVAGSMAGTLGAAQSDKGPYSAIVGISLEDGQKLIKLAEAGSVSVDLWVDSKQENRTTYNVVAQTKGGDPNNVVALGGHTDSVEAGPGINDDGSGIISNLVIAKALTQYSVKNAVRFLFWTAEEFGLLGSNYYVSHLNATELNKIRLYLNFDMIASPNYALMIYDGDGSAFNQSGPAGSAQIEKLFEDYYDSIDLPHIPTQFDGRSDYEAFILNGIPSGGLFTGAEGIMSEENASRWGGQAGVAYDANYHAAGDNMTNLNHEAFLINSKATAFAVATYANDLSSIPKRNTTSSLHRRARTMRPFGKRAPKTHAHVSGSGCWHSQVEA.

The N-terminal stretch at 1 to 16 (MRSLLWASLLSGVLAG) is a signal peptide. Positions 111–205 (PSVEVTADVA…SLEDGQKLIK (95 aa)) constitute a PA domain. Residue Asn224 is glycosylated (N-linked (GlcNAc...) asparagine). 2 residues coordinate Zn(2+): His248 and Asp260. Residue Glu292 is the Proton acceptor of the active site. Residue Glu293 participates in Zn(2+) binding. Asn307 is a glycosylation site (N-linked (GlcNAc...) asparagine). Asp321 contributes to the Zn(2+) binding site. N-linked (GlcNAc...) asparagine glycosylation is found at Asn341 and Asn402. Position 419 (His419) interacts with Zn(2+). Residues Asn424 and Asn458 are each glycosylated (N-linked (GlcNAc...) asparagine). A disordered region spans residues 475-496 (KRAPKTHAHVSGSGCWHSQVEA).

It belongs to the peptidase M28 family. M28A subfamily. Monomer. Requires Zn(2+) as cofactor.

Its subcellular location is the secreted. Functionally, extracellular aminopeptidase that releases a wide variety of amino acids from natural peptides. The sequence is that of probable leucine aminopeptidase 2 (lap2) from Aspergillus oryzae (strain ATCC 42149 / RIB 40) (Yellow koji mold).